We begin with the raw amino-acid sequence, 417 residues long: NADH-quinone oxidoreductase subunit D (417 aa).

Belongs to the complex I 49 kDa subunit family. As to quaternary structure, NDH-1 is composed of 14 different subunits. Subunits NuoB, C, D, E, F, and G constitute the peripheral sector of the complex.

It localises to the cell inner membrane. It catalyses the reaction a quinone + NADH + 5 H(+)(in) = a quinol + NAD(+) + 4 H(+)(out). Its function is as follows. NDH-1 shuttles electrons from NADH, via FMN and iron-sulfur (Fe-S) centers, to quinones in the respiratory chain. The immediate electron acceptor for the enzyme in this species is believed to be ubiquinone. Couples the redox reaction to proton translocation (for every two electrons transferred, four hydrogen ions are translocated across the cytoplasmic membrane), and thus conserves the redox energy in a proton gradient. This is NADH-quinone oxidoreductase subunit D from Paraburkholderia phytofirmans (strain DSM 17436 / LMG 22146 / PsJN) (Burkholderia phytofirmans).